A 78-amino-acid chain; its full sequence is Large ribosomal subunit protein bL28 (78 aa).

Belongs to the bacterial ribosomal protein bL28 family.

The protein is Large ribosomal subunit protein bL28 of Dichelobacter nodosus (strain VCS1703A).